A 190-amino-acid polypeptide reads, in one-letter code: Signal peptidase I W (190 aa).

A helical membrane pass occupies residues 4 to 24; it reads ISNILYVIIFTLIIVLTLVVI. S45 is a catalytic residue. A helical transmembrane segment spans residues 143-163; it reads PIGTAVLLIVPGVMLLVYAFV.

The protein belongs to the peptidase S26B family.

The protein localises to the cell membrane. It catalyses the reaction Cleavage of hydrophobic, N-terminal signal or leader sequences from secreted and periplasmic proteins.. In terms of biological role, required for the cleavage of the signal sequence of TasA and TapA, which are involved in biofilm formation. This is Signal peptidase I W from Bacillus subtilis (strain 168).